Reading from the N-terminus, the 734-residue chain is Cullin-4 (734 aa).

The 63-residue stretch at 666–728 folds into the Cullin neddylation domain; it reads DRQFELQASI…KEYLEREDND (63 aa). Residue Lys-680 forms a Glycyl lysine isopeptide (Lys-Gly) (interchain with G-Cter in NEDD8) linkage.

Belongs to the cullin family. As to quaternary structure, component of the Clr4 methyltransferase complex (ClrC) composed of at least clr4, rik1, pcu4, rbx1, raf1 and raf2. The cullin pcu4, rik1, raf1, raf2 and the ring-box protein rbx1 are components of an E3 ubiquitin ligase, whose activity is essential for heterochromatin assembly. Post-translationally, neddylated; enhancing the ubiquitin-ligase activity.

Its subcellular location is the cytoplasm. It localises to the nucleus. The protein resides in the chromosome. Its pathway is protein modification; protein ubiquitination. Functionally, required, indirectly, for activation of ribonucleotide reductase through the degradation of the protein spd1, thereby supplying deoxyribonucleotides for DNA replication and repair. Also has a role as a scaffold for assembling ubiquitin ligases. Component of the Clr4 methyltransferase complex (ClrC) which contributes to the establishment of heterochromatin by specifically methylating histone H3 to form H3K9me. ClrC preferentially ubiquitylates H3K14 and ClrC-mediated H3 ubiquitination promotes clr4 methyltransferase activity for the methylation of H3K9. H3K9me represents a specific tag for epigenetic transcriptional repression by recruiting swi6/HP1 to methylated histones which leads to transcriptional silencing within centromeric heterochromatin, telomeric regions and at the silent mating-type loci. The chain is Cullin-4 (pcu4) from Schizosaccharomyces pombe (strain 972 / ATCC 24843) (Fission yeast).